The primary structure comprises 222 residues: Deoxyribose-phosphate aldolase (222 aa).

Asp90 acts as the Proton donor/acceptor in catalysis. The active-site Schiff-base intermediate with acetaldehyde is Lys152. Lys181 functions as the Proton donor/acceptor in the catalytic mechanism.

The protein belongs to the DeoC/FbaB aldolase family. DeoC type 1 subfamily.

The protein resides in the cytoplasm. It catalyses the reaction 2-deoxy-D-ribose 5-phosphate = D-glyceraldehyde 3-phosphate + acetaldehyde. The protein operates within carbohydrate degradation; 2-deoxy-D-ribose 1-phosphate degradation; D-glyceraldehyde 3-phosphate and acetaldehyde from 2-deoxy-alpha-D-ribose 1-phosphate: step 2/2. Catalyzes a reversible aldol reaction between acetaldehyde and D-glyceraldehyde 3-phosphate to generate 2-deoxy-D-ribose 5-phosphate. The polypeptide is Deoxyribose-phosphate aldolase (Pectobacterium carotovorum subsp. carotovorum (strain PC1)).